Here is a 327-residue protein sequence, read N- to C-terminus: WRKY transcription factor WRKY76 (327 aa).

The stretch at 56–76 forms a coiled coil; it reads AKIVEAKVTQMSEENRRLTEV. The interval 87-135 is disordered; it reads RLGLDGSASPPRPVSPLSGKKRSRESMETANSCDANSNRHQGGDADHAE. The Nuclear localization signal motif lies at 106–112; it reads KKRSRES. Polar residues predominate over residues 114-126; the sequence is ETANSCDANSNRH. Residues 160–226 constitute a DNA-binding region (WRKY); that stretch reads DTSLVVKDGY…YEGEHNHPHP (67 aa).

It belongs to the WRKY group II-a family.

It is found in the nucleus. In terms of biological role, transcription repressor. Interacts specifically with the W box (5'-(T)TGAC[CT]-3'), a frequently occurring elicitor-responsive cis-acting element. Regulates, probably indirectly, the activation of defense-related genes during defense response. Modulates plant innate immunity against X.oryzae pv. oryzae (Xoo). This chain is WRKY transcription factor WRKY76, found in Oryza sativa subsp. japonica (Rice).